The sequence spans 316 residues: WEB family protein At3g13190 (316 aa).

Coiled coils occupy residues 42–90, 119–195, and 233–266; these read WNKE…MIND, EEES…AEEH, and RDET…MAQE. Positions 295 to 316 are disordered; sequence STKEVLKSKPRSSSKEGCLVKC.

It belongs to the WEB family.

This Arabidopsis thaliana (Mouse-ear cress) protein is WEB family protein At3g13190.